We begin with the raw amino-acid sequence, 140 residues long: Pro-variola growth factor (140 aa).

An N-terminal signal peptide occupies residues 1–18 (MSMKYLMLLFAAMIIRSF). Over 19–100 (ANSGNAIETT…SEKPNTTTSY (82 aa)) the chain is Extracellular. N34 is a glycosylation site (N-linked (GlcNAc...) asparagine; by host). The region spanning 41 to 81 (AIRLCGPEGDRYCFHGICIHARDIDGMYCRCSHGYTGIRCQ) is the EGF-like domain. 3 cysteine pairs are disulfide-bonded: C45/C58, C53/C69, and C71/C80. N95 is a glycosylation site (N-linked (GlcNAc...) asparagine; by host). A helical membrane pass occupies residues 101–121 (IPSPGIVLVLLVSIIVCCLLF). The Cytoplasmic segment spans residues 122-140 (VYRFTRRTNKLPLQDMVVP).

This sequence belongs to the orthopoxvirus OPG019 family. As to quaternary structure, variola growth factor interacts with host EGFR and promotes EGFR dimerization.

It localises to the host membrane. It is found in the secreted. Stimulates cellular proliferation (hyperplasia)and mobility around infected cells to promote rapid and efficient spread of infection. This effect is beneficial for virus replication in vivo, because poxviruses replicate possibly better in proliferating cells than in quiescent cells. Acts by binding host EGFR, inducing its dimerization, autophosphorylation and leading to activation of several cellular pathways regulating cell proliferation or cell survival. The activation by host EGFR of mitogen activated protein kinases (MAPK) and extracellular-signal regulated kinases (ERK) are essential for the positive effect of vaccinia growth factor on poxvirus virulence in vivo. This is Pro-variola growth factor (OPG019) from Variola virus (isolate Human/India/Ind3/1967) (VARV).